The sequence spans 370 residues: Galanin receptor type 3 (370 aa).

Topologically, residues 1–20 are extracellular; sequence MADIQNISLDSPGSVGAVAV. The N-linked (GlcNAc...) asparagine glycan is linked to Asn-6. Residues 21–41 form a helical membrane-spanning segment; it reads PVVFALIFLLGMVGNGLVLAV. Residues 42–57 are Cytoplasmic-facing; the sequence is LLQPGPSAWQEPGSTT. The helical transmembrane segment at 58-78 threads the bilayer; it reads DLFILNLAVADLCFILCCVPF. Topologically, residues 79–96 are extracellular; that stretch reads QAAIYTLDAWLFGAFVCK. Cys-95 and Cys-172 are oxidised to a cystine. Residues 97-118 traverse the membrane as a helical segment; the sequence is TVHLLIYLTMYASSFTLAAVSV. The Cytoplasmic segment spans residues 119 to 138; the sequence is DRYLAVRHPLRSRALRTPRN. The chain crosses the membrane as a helical span at residues 139 to 159; the sequence is ARAAVGLVWLLAALFSAPYLS. At 160 to 184 the chain is on the extracellular side; sequence YYGTVRYGALELCVPAWEDARRRAL. Residues 185-205 traverse the membrane as a helical segment; it reads DVATFAAGYLLPVTVVSLAYG. Residues 206–236 are Cytoplasmic-facing; it reads RTLCFLWAAVGPAGAAAAEARRRATGRAGRA. Residues 237-257 form a helical membrane-spanning segment; the sequence is MLTVAALYALCWGPHHALILC. The Extracellular portion of the chain corresponds to 258–259; the sequence is FW. The chain crosses the membrane as a helical span at residues 260 to 280; that stretch reads YGRFAFSPATYACRLASHCLA. The Cytoplasmic segment spans residues 281 to 370; it reads YANSCLNPLV…RLTLSARGPQ (90 aa). Residue Cys-308 is the site of S-palmitoyl cysteine attachment. Positions 328–370 are disordered; it reads QPASSGPAGYPGDARPRGWSMEPRGDALRGGETRLTLSARGPQ. Over residues 350–359 the composition is skewed to basic and acidic residues; that stretch reads PRGDALRGGE.

Belongs to the G-protein coupled receptor 1 family.

It localises to the cell membrane. Its function is as follows. Receptor for the hormone galanin and spexin-1. The chain is Galanin receptor type 3 (Galr3) from Mus musculus (Mouse).